Here is a 358-residue protein sequence, read N- to C-terminus: Putative cell-type specific agglutination protein pfl7 (358 aa).

An N-terminal signal peptide occupies residues 1–23; the sequence is MNSLKSLCLKCIVTLCLLVNAFA. N-linked (GlcNAc...) asparagine glycosylation is found at N67, N88, N112, and N136. The disordered stretch occupies residues 90–144; that stretch reads TISTSSSTPITASVPTSSSILSNSTIPTTSPVPTTSSTPTSSSILSNSTIPSSSS. A run of 2 repeats spans residues 148–180 and 181–218. Residues 148–218 are 2 X 36 AA approximate tandem repeats; it reads STITTTIISG…GLVEVITPSC (71 aa). A DIPSY domain is found at 207–358; the sequence is QSGLVEVITP…RADDVILVAY (152 aa). N-linked (GlcNAc...) asparagine glycans are attached at residues N245 and N305.

It belongs to the mam3/map4 family.

It is found in the cell surface. In terms of biological role, may be involved in agglutination during conjugation or other aspects of colony formation. Induces flocculation when overexpressed. The polypeptide is Putative cell-type specific agglutination protein pfl7 (Schizosaccharomyces pombe (strain 972 / ATCC 24843) (Fission yeast)).